We begin with the raw amino-acid sequence, 479 residues long: tRNA modification GTPase MnmE (479 aa).

(6S)-5-formyl-5,6,7,8-tetrahydrofolate contacts are provided by Arg-25, Glu-82, and Lys-134. Positions 230–401 (GLRVVIAGQP…LRAALLARAG (172 aa)) constitute a TrmE-type G domain. Asn-240 lines the K(+) pocket. Residues 240-245 (NAGKSS), 259-265 (TPIPGTT), 284-287 (DTAG), 352-355 (NKAD), and 382-384 (SAR) each bind GTP. Ser-244 is a Mg(2+) binding site. Positions 259, 261, and 264 each coordinate K(+). Thr-265 contacts Mg(2+). (6S)-5-formyl-5,6,7,8-tetrahydrofolate is bound at residue Lys-479.

Belongs to the TRAFAC class TrmE-Era-EngA-EngB-Septin-like GTPase superfamily. TrmE GTPase family. In terms of assembly, homodimer. Heterotetramer of two MnmE and two MnmG subunits. It depends on K(+) as a cofactor.

The protein localises to the cytoplasm. Its function is as follows. Exhibits a very high intrinsic GTPase hydrolysis rate. Involved in the addition of a carboxymethylaminomethyl (cmnm) group at the wobble position (U34) of certain tRNAs, forming tRNA-cmnm(5)s(2)U34. In Leptothrix cholodnii (strain ATCC 51168 / LMG 8142 / SP-6) (Leptothrix discophora (strain SP-6)), this protein is tRNA modification GTPase MnmE.